The sequence spans 181 residues: Adenine phosphoribosyltransferase (181 aa).

It belongs to the purine/pyrimidine phosphoribosyltransferase family. Homodimer.

It is found in the cytoplasm. The catalysed reaction is AMP + diphosphate = 5-phospho-alpha-D-ribose 1-diphosphate + adenine. The protein operates within purine metabolism; AMP biosynthesis via salvage pathway; AMP from adenine: step 1/1. Functionally, catalyzes a salvage reaction resulting in the formation of AMP, that is energically less costly than de novo synthesis. This chain is Adenine phosphoribosyltransferase, found in Methylobacterium nodulans (strain LMG 21967 / CNCM I-2342 / ORS 2060).